The sequence spans 187 residues: UPF0200 protein PYRAB09750 (187 aa).

7 to 14 (GMPGSGKG) contributes to the ATP binding site.

This sequence belongs to the UPF0200 family.

The polypeptide is UPF0200 protein PYRAB09750 (Pyrococcus abyssi (strain GE5 / Orsay)).